The chain runs to 199 residues: Glycerol-3-phosphate acyltransferase (199 aa).

The next 5 helical transmembrane spans lie at 5 to 25, 51 to 71, 79 to 99, 112 to 132, and 153 to 173; these read AFLVLTYLLGAFPFGLVVALV, KLGVLTLVLDLAKGLVPVLCA, VFLSMVAVAAVVGHMYSVFLY, VFLGGAPIPALLSVAVCVAVI, and CAWLGPVFLVPAAAIIGGLVI.

Belongs to the PlsY family. In terms of assembly, probably interacts with PlsX.

It is found in the cell inner membrane. The enzyme catalyses an acyl phosphate + sn-glycerol 3-phosphate = a 1-acyl-sn-glycero-3-phosphate + phosphate. The protein operates within lipid metabolism; phospholipid metabolism. Its function is as follows. Catalyzes the transfer of an acyl group from acyl-phosphate (acyl-PO(4)) to glycerol-3-phosphate (G3P) to form lysophosphatidic acid (LPA). This enzyme utilizes acyl-phosphate as fatty acyl donor, but not acyl-CoA or acyl-ACP. The polypeptide is Glycerol-3-phosphate acyltransferase (Solidesulfovibrio magneticus (strain ATCC 700980 / DSM 13731 / RS-1) (Desulfovibrio magneticus)).